The chain runs to 250 residues: tRNA (guanine-N(1)-)-methyltransferase (250 aa).

Residues Gly-108 and Leu-127 to Leu-132 contribute to the S-adenosyl-L-methionine site.

The protein belongs to the RNA methyltransferase TrmD family. In terms of assembly, homodimer.

The protein resides in the cytoplasm. The enzyme catalyses guanosine(37) in tRNA + S-adenosyl-L-methionine = N(1)-methylguanosine(37) in tRNA + S-adenosyl-L-homocysteine + H(+). Its function is as follows. Specifically methylates guanosine-37 in various tRNAs. This is tRNA (guanine-N(1)-)-methyltransferase from Streptococcus agalactiae serotype Ia (strain ATCC 27591 / A909 / CDC SS700).